Reading from the N-terminus, the 554-residue chain is Urocanate hydratase (554 aa).

NAD(+) contacts are provided by residues 50–51, Q128, 174–176, E194, R199, 240–241, 261–265, 271–272, and Y320; these read GG, GMG, NA, QTSAH, and YI. The active site involves C408. An NAD(+)-binding site is contributed by G490.

The protein belongs to the urocanase family. It depends on NAD(+) as a cofactor.

The protein resides in the cytoplasm. It catalyses the reaction 4-imidazolone-5-propanoate = trans-urocanate + H2O. The protein operates within amino-acid degradation; L-histidine degradation into L-glutamate; N-formimidoyl-L-glutamate from L-histidine: step 2/3. Catalyzes the conversion of urocanate to 4-imidazolone-5-propionate. The protein is Urocanate hydratase of Rubrobacter xylanophilus (strain DSM 9941 / JCM 11954 / NBRC 16129 / PRD-1).